The primary structure comprises 203 residues: RNA chaperone ProQ (203 aa).

A disordered region spans residues 111–138 (KAKRQALAPKKPAKKVAPKRAPAVKKER).

Belongs to the ProQ family.

It localises to the cytoplasm. RNA chaperone with significant RNA binding, RNA strand exchange and RNA duplexing activities. The sequence is that of RNA chaperone ProQ from Shewanella frigidimarina (strain NCIMB 400).